Consider the following 301-residue polypeptide: Glycine--tRNA ligase alpha subunit (301 aa).

The protein belongs to the class-II aminoacyl-tRNA synthetase family. Tetramer of two alpha and two beta subunits.

It is found in the cytoplasm. The enzyme catalyses tRNA(Gly) + glycine + ATP = glycyl-tRNA(Gly) + AMP + diphosphate. The protein is Glycine--tRNA ligase alpha subunit of Glaesserella parasuis serovar 5 (strain SH0165) (Haemophilus parasuis).